We begin with the raw amino-acid sequence, 732 residues long: Protein kinase YpkA (732 aa).

The 273-residue stretch at 136–408 (VAETDKFAEG…SNEARLHEFL (273 aa)) folds into the Protein kinase domain. Residues 142–150 (FAEGESHIS) and Lys163 each bind ATP. Residue Asp270 is the Proton acceptor of the active site.

Belongs to the protein kinase superfamily. Ser/Thr protein kinase family.

It is found in the secreted. The catalysed reaction is L-seryl-[protein] + ATP = O-phospho-L-seryl-[protein] + ADP + H(+). The enzyme catalyses L-threonyl-[protein] + ATP = O-phospho-L-threonyl-[protein] + ADP + H(+). Its function is as follows. Acts as a virulence determinant. In Yersinia pestis, this protein is Protein kinase YpkA (ypkA).